We begin with the raw amino-acid sequence, 437 residues long: MEVDGETQIEELECDIRTLRKQLKAKVQQLKTLKKHFQKNCINKLNNNEIARYSRQIILSEIGVQGQLKLKRSSVLVVGAGGLGCPSALYLAGAGIGRIGILDYDEVELTNLHRQLLHTECSVGLTKVESVRSYLEELNSQIEIVTHHIQLTSDNALQTLESYDIVVDATDNVATRYLLNDACVLLKKPLVSGSALQLEGQLTVYNFNGGPCYRCLFPNPPPPETVTNCGDGGVLGAITGVIGALQALETIKIILGNSGVLSGRLLLFDGHQSTFRNLKLRPKKADCAVCSDNPSLTKLIDYEQFCSMKATDKDSHLNLLAPHERITVQEYKSLAESNVPHLLVDVRGANQFEICQLPASINVPIDDILKNRRTAEVTQLAATGGPVFVVCRRGNDSQLAVRHLSQLFQEQGLAPPRDIVGGLHAWTHNIDPEFPIY.

Residues Gly82, Asp103, 110–114 (TNLHR), Lys127, and 171–172 (DN) contribute to the ATP site. The Zn(2+) site is built by Cys212 and Cys215. Catalysis depends on Cys229, which acts as the Glycyl thioester intermediate; for adenylyltransferase activity. Residues Cys287 and Cys290 each contribute to the Zn(2+) site. The Rhodanese domain occupies 337-435 (SNVPHLLVDV…WTHNIDPEFP (99 aa)). Cys391 (cysteine persulfide intermediate; for sulfurtransferase activity) is an active-site residue.

This sequence in the N-terminal section; belongs to the HesA/MoeB/ThiF family. UBA4 subfamily. Zn(2+) serves as cofactor.

It localises to the cytoplasm. It is found in the cytosol. It carries out the reaction [molybdopterin-synthase sulfur-carrier protein]-C-terminal Gly-Gly + ATP + H(+) = [molybdopterin-synthase sulfur-carrier protein]-C-terminal Gly-Gly-AMP + diphosphate. It catalyses the reaction [molybdopterin-synthase sulfur-carrier protein]-C-terminal Gly-Gly-AMP + S-sulfanyl-L-cysteinyl-[cysteine desulfurase] + AH2 = [molybdopterin-synthase sulfur-carrier protein]-C-terminal-Gly-aminoethanethioate + L-cysteinyl-[cysteine desulfurase] + A + AMP + 2 H(+). The protein operates within tRNA modification; 5-methoxycarbonylmethyl-2-thiouridine-tRNA biosynthesis. Its pathway is cofactor biosynthesis; molybdopterin biosynthesis. In terms of biological role, plays a central role in 2-thiolation of mcm(5)S(2)U at tRNA wobble positions of cytosolic tRNA(Lys), tRNA(Glu) and tRNA(Gln). Also essential during biosynthesis of the molybdenum cofactor. Acts by mediating the C-terminal thiocarboxylation of sulfur carriers URM1 and MOCS2A. Its N-terminus first activates URM1 and MOCS2A as acyl-adenylates (-COAMP), then the persulfide sulfur on the catalytic cysteine is transferred to URM1 and MOCS2A to form thiocarboxylation (-COSH) of their C-terminus. The reaction probably involves hydrogen sulfide that is generated from the persulfide intermediate and that acts as a nucleophile towards URM1 and MOCS2A. Subsequently, a transient disulfide bond is formed. Does not use thiosulfate as sulfur donor; NFS1 probably acting as a sulfur donor for thiocarboxylation reactions. This is Adenylyltransferase and sulfurtransferase MOCS3 from Aedes aegypti (Yellowfever mosquito).